The primary structure comprises 164 residues: Dehydrin Rab16C (164 aa).

A compositionally biased stretch (gly residues) spans 42–51 (MGGHHAGAGG). The tract at residues 42–164 (MGGHHAGAGG…KIKEKLPGQH (123 aa)) is disordered. Over residues 105-115 (GNNHQQQQMMG) the composition is skewed to low complexity. Gly residues predominate over residues 128 to 138 (GMTGAGTGTGV). Residues 147–164 (GEKKGFMDKIKEKLPGQH) are compositionally biased toward basic and acidic residues.

This sequence belongs to the plant dehydrin family.

The chain is Dehydrin Rab16C (RAB16C) from Oryza sativa subsp. indica (Rice).